Here is a 263-residue protein sequence, read N- to C-terminus: uncharacterized protein (263 aa).

Transmembrane regions (helical) follow at residues 53–73 (FWII…LVKI), 103–123 (GFLF…LPGL), 130–150 (IILP…VFSY), 153–173 (LIPA…EPLW), 181–201 (FILV…IQIL), 213–233 (MLAA…ILTP), and 241–261 (LLLS…LFLI).

Belongs to the TatC family.

It localises to the plastid. Its subcellular location is the chloroplast membrane. This is an uncharacterized protein from Trieres chinensis (Marine centric diatom).